Here is a 291-residue protein sequence, read N- to C-terminus: ATP synthase gamma chain (291 aa).

Belongs to the ATPase gamma chain family. F-type ATPases have 2 components, CF(1) - the catalytic core - and CF(0) - the membrane proton channel. CF(1) has five subunits: alpha(3), beta(3), gamma(1), delta(1), epsilon(1). CF(0) has three main subunits: a, b and c.

The protein localises to the cell inner membrane. Its function is as follows. Produces ATP from ADP in the presence of a proton gradient across the membrane. The gamma chain is believed to be important in regulating ATPase activity and the flow of protons through the CF(0) complex. In Ruegeria sp. (strain TM1040) (Silicibacter sp.), this protein is ATP synthase gamma chain.